Consider the following 571-residue polypeptide: ADNLAEFHVQNQECDSCHTPDGELSNDSLTYENTQCVSCHGTLEEVAETTKHEHYNAHASHFPGEVACTSCHSAHEKSMVYCDSCHSFDFNMPYAKKWQRDEPTIAELAKDKSERQAALASAPHDTVDVVVVGSGGAGFSAAISATDSGAKVILIEKEPVIGGNAKLAAGGMNAAWTDQQKAKKITDSPELMFEDTMKGGQNINDPALVKVLSSHSKDSVDWMTAMGADLTDVGMMGGASVNRAHRPTGGAGVGAHVVQVLYDNAVKRNIDLRMNTRGIEVLKDDKGTVKGILVKGMYKGYYWVKADAVILATGGFAKNNERVAKLDPSLKGFISTNQPGAVGDGLDVAENAGGALKDMQYIQAHPTLSVKGGVMVTEAVRGNGAILVNREGKRFVNEITTRDKASAAILAQTGKSAYLIFDDSVRKSLSKIDKYIGLGVAPTADSLVKLGKMEGIDGKALTETVARYNSLVSSGKDTDFERPNLPRALNEGNYYAIEVTPGVHHTMGGVMIDTKAEVMNAKKQVIPGLYGAGEVTGGVHGANRLGGNAISDIITFGRLAGEEAAKYSKKN.

Residues His-8, Cys-14, Cys-17, His-18, Cys-36, Cys-39, His-40, His-52, His-58, His-61, Cys-68, Cys-71, His-72, Ala-74, His-75, Cys-82, Cys-85, His-86, Asn-91, and Tyr-94 each contribute to the heme c site. The flavoprotein-like stretch occupies residues 118–571; that stretch reads ALASAPHDTV…EEAAKYSKKN (454 aa). Positions 137, 156, 164, 165, 169, 170, 171, 278, and 338 each coordinate FAD. Position 170 (Gly-170) interacts with succinate. Residues His-365, Thr-377, and Glu-378 each coordinate succinate. Fumarate contacts are provided by Thr-377, Glu-378, and Arg-402. Arg-402 acts as the Proton donor in catalysis. Position 431 (Lys-431) interacts with heme c. Residue His-504 participates in succinate binding. Fumarate is bound at residue His-504. FAD is bound by residues His-505 and Glu-534. Arg-544 and Gly-547 together coordinate succinate. Residues Arg-544 and Gly-547 each contribute to the fumarate site. FAD is bound by residues Ala-549 and Ile-550.

In terms of assembly, monomer. FAD is required as a cofactor. It depends on heme c as a cofactor.

It is found in the periplasm. It carries out the reaction 2 Fe(III)-[cytochrome c] + succinate = fumarate + 2 Fe(II)-[cytochrome c] + 2 H(+). Its function is as follows. Flavocytochrome that catalyzes the reduction of fumarate to succinate. Is essential for fumarate respiration during anaerobic growth, acting as the terminal reductase. Receives electrons from the membrane-bound tetraheme c-type cytochrome CymA. In vitro, can use the artificial electron donor methyl viologen. This is Fumarate reductase (cytochrome) (fccA) from Shewanella frigidimarina.